A 291-amino-acid chain; its full sequence is ATP synthase gamma chain (291 aa).

The protein belongs to the ATPase gamma chain family. In terms of assembly, F-type ATPases have 2 components, CF(1) - the catalytic core - and CF(0) - the membrane proton channel. CF(1) has five subunits: alpha(3), beta(3), gamma(1), delta(1), epsilon(1). CF(0) has three main subunits: a, b and c.

It localises to the cell inner membrane. In terms of biological role, produces ATP from ADP in the presence of a proton gradient across the membrane. The gamma chain is believed to be important in regulating ATPase activity and the flow of protons through the CF(0) complex. This Neisseria gonorrhoeae (strain ATCC 700825 / FA 1090) protein is ATP synthase gamma chain.